A 178-amino-acid chain; its full sequence is Large ribosomal subunit protein uL6 (178 aa).

Belongs to the universal ribosomal protein uL6 family. In terms of assembly, part of the 50S ribosomal subunit.

This protein binds to the 23S rRNA, and is important in its secondary structure. It is located near the subunit interface in the base of the L7/L12 stalk, and near the tRNA binding site of the peptidyltransferase center. This Opitutus terrae (strain DSM 11246 / JCM 15787 / PB90-1) protein is Large ribosomal subunit protein uL6.